The primary structure comprises 405 residues: Putative polysaccharide ligase RP358 (405 aa).

10 helical membrane passes run Ile-23–Ile-43, Leu-77–Val-97, Val-120–Ile-140, Phe-156–Ile-178, Ile-201–Ala-221, Ile-227–Ala-247, Leu-270–Phe-290, Ile-322–Tyr-342, Val-353–Tyr-375, and Ile-377–Val-397.

It belongs to the O-antigen ligase family.

It localises to the membrane. The sequence is that of Putative polysaccharide ligase RP358 from Rickettsia prowazekii (strain Madrid E).